The primary structure comprises 466 residues: Paraneoplastic antigen Ma3 homolog (466 aa).

A disordered region spans residues 379 to 408 (RPYQGSRRRRHRRRGQHRKGGVPRDDSQGT). Over residues 384-399 (SRRRRHRRRGQHRKGG) the composition is skewed to basic residues. The CCHC-type zinc finger occupies 415–432 (TFCYSCGEDGHIRVHCFN). A disordered region spans residues 441–466 (QKRQAAMEKGNRSWAWEKSHPKPKTK). Over residues 445–460 (AAMEKGNRSWAWEKSH) the composition is skewed to basic and acidic residues.

This sequence belongs to the PNMA family. In terms of tissue distribution, expressed in the cerebrum and cerebellum.

The protein resides in the nucleus. It is found in the nucleolus. The polypeptide is Paraneoplastic antigen Ma3 homolog (Pnma3) (Mus musculus (Mouse)).